A 431-amino-acid chain; its full sequence is Serine/threonine-protein kinase PknA (431 aa).

Topologically, residues 1–339 (MSPRVGVTLS…RRTFSSGQRA (339 aa)) are cytoplasmic. A Protein kinase domain is found at 13–272 (YRLQRLIATG…SGGPFADAVA (260 aa)). ATP-binding positions include 19–27 (IATGGMGQV) and Lys42. The active-site Proton acceptor is Asp141. The interval 276 to 333 (AGRRPPRPSQTPPPGRAAPAAIPSGTTARVAANSAGRTAASRRSRPATGGHRPPRRTF) is disordered. Pro residues predominate over residues 282-291 (RPSQTPPPGR). Residues 292–314 (AAPAAIPSGTTARVAANSAGRTA) are compositionally biased toward low complexity. Residues 340-360 (LLWAAGVLGALAIIIAVLLVI) form a helical membrane-spanning segment. Residues 361 to 431 (KAPGDNSPQQ…ASLARYEIAQ (71 aa)) are Extracellular-facing. The disordered stretch occupies residues 366–418 (NSPQQAPTPTVTTTGNPPASNTGGTDASPRLNWTERGETRHSGLQSWVVPPTP). Residues 368–384 (PQQAPTPTVTTTGNPPA) show a composition bias toward low complexity.

It belongs to the protein kinase superfamily. Ser/Thr protein kinase family. Post-translationally, autophosphorylated.

It localises to the cell membrane. The catalysed reaction is L-seryl-[protein] + ATP = O-phospho-L-seryl-[protein] + ADP + H(+). It carries out the reaction L-threonyl-[protein] + ATP = O-phospho-L-threonyl-[protein] + ADP + H(+). Functionally, protein kinase that regulates many aspects of mycobacterial physiology. Is a key component of a signal transduction pathway that regulates cell growth, cell shape and cell division via phosphorylation of target proteins. In Mycobacterium bovis (strain ATCC BAA-935 / AF2122/97), this protein is Serine/threonine-protein kinase PknA (pknA).